The following is a 59-amino-acid chain: Large ribosomal subunit protein bL32 (59 aa).

Basic residues predominate over residues 1 to 16; sequence MAVPKRKTSPSKRGMR. Positions 1–59 are disordered; sequence MAVPKRKTSPSKRGMRRSADALKAPTYVEDKNSGELRRPHHIDLKSGMYRGRQVLEAKE. Residues 28–44 are compositionally biased toward basic and acidic residues; the sequence is VEDKNSGELRRPHHIDL.

The protein belongs to the bacterial ribosomal protein bL32 family.

The sequence is that of Large ribosomal subunit protein bL32 from Brucella anthropi (strain ATCC 49188 / DSM 6882 / CCUG 24695 / JCM 21032 / LMG 3331 / NBRC 15819 / NCTC 12168 / Alc 37) (Ochrobactrum anthropi).